Reading from the N-terminus, the 74-residue chain is RNA-binding protein Hfq (74 aa).

The Sm domain maps to 9–69 (DQFLNQLRKE…ISTFMPQKNV (61 aa)).

Belongs to the Hfq family. As to quaternary structure, homohexamer.

Functionally, RNA chaperone that binds small regulatory RNA (sRNAs) and mRNAs to facilitate mRNA translational regulation in response to envelope stress, environmental stress and changes in metabolite concentrations. Also binds with high specificity to tRNAs. This is RNA-binding protein Hfq from Bacillus cytotoxicus (strain DSM 22905 / CIP 110041 / 391-98 / NVH 391-98).